The following is a 188-amino-acid chain: Chitin synthase 2 (188 aa).

This sequence belongs to the chitin synthase family.

The protein resides in the cell membrane. It catalyses the reaction [(1-&gt;4)-N-acetyl-beta-D-glucosaminyl](n) + UDP-N-acetyl-alpha-D-glucosamine = [(1-&gt;4)-N-acetyl-beta-D-glucosaminyl](n+1) + UDP + H(+). In terms of biological role, polymerizes chitin, a structural polymer of the cell wall and septum, by transferring the sugar moiety of UDP-GlcNAc to the non-reducing end of the growing chitin polymer. This Exophiala jeanselmei (Dematiaceous fungus) protein is Chitin synthase 2 (CHS2).